The sequence spans 227 residues: ATP-dependent dethiobiotin synthetase BioD (227 aa).

13-18 (DIGKTY) contacts ATP. Thr17 is a Mg(2+) binding site. Lys38 is an active-site residue. Substrate is bound at residue Ser42. ATP contacts are provided by residues Asp55, 116–119 (EGSG), and 179–180 (NN). 2 residues coordinate Mg(2+): Asp55 and Glu116.

Belongs to the dethiobiotin synthetase family. In terms of assembly, homodimer. Mg(2+) serves as cofactor.

The protein resides in the cytoplasm. The catalysed reaction is (7R,8S)-7,8-diammoniononanoate + CO2 + ATP = (4R,5S)-dethiobiotin + ADP + phosphate + 3 H(+). Its pathway is cofactor biosynthesis; biotin biosynthesis; biotin from 7,8-diaminononanoate: step 1/2. Catalyzes a mechanistically unusual reaction, the ATP-dependent insertion of CO2 between the N7 and N8 nitrogen atoms of 7,8-diaminopelargonic acid (DAPA, also called 7,8-diammoniononanoate) to form a ureido ring. This is ATP-dependent dethiobiotin synthetase BioD from Clostridium botulinum (strain ATCC 19397 / Type A).